A 151-amino-acid polypeptide reads, in one-letter code: Large ribosomal subunit protein bL9 (151 aa).

This sequence belongs to the bacterial ribosomal protein bL9 family.

Functionally, binds to the 23S rRNA. The polypeptide is Large ribosomal subunit protein bL9 (Kosmotoga olearia (strain ATCC BAA-1733 / DSM 21960 / TBF 19.5.1)).